A 596-amino-acid polypeptide reads, in one-letter code: Elongation factor 4 (596 aa).

In terms of domain architecture, tr-type G spans 2 to 184; sequence KHIRNFSIIA…VIVEQIPPPE (183 aa). GTP contacts are provided by residues 14-19 and 131-134; these read DHGKST and NKID.

It belongs to the TRAFAC class translation factor GTPase superfamily. Classic translation factor GTPase family. LepA subfamily.

The protein localises to the cell inner membrane. The enzyme catalyses GTP + H2O = GDP + phosphate + H(+). In terms of biological role, required for accurate and efficient protein synthesis under certain stress conditions. May act as a fidelity factor of the translation reaction, by catalyzing a one-codon backward translocation of tRNAs on improperly translocated ribosomes. Back-translocation proceeds from a post-translocation (POST) complex to a pre-translocation (PRE) complex, thus giving elongation factor G a second chance to translocate the tRNAs correctly. Binds to ribosomes in a GTP-dependent manner. The protein is Elongation factor 4 of Shewanella sp. (strain MR-7).